A 379-amino-acid polypeptide reads, in one-letter code: Cytochrome b (379 aa).

Transmembrane regions (helical) follow at residues 33–53, 77–98, 113–133, and 178–198; these read FGSL…FLAM, WLIR…FIHV, WNIG…GYVL, and FFAF…VHLL. Residues His83 and His97 each contribute to the heme b site. The heme b site is built by His182 and His196. Residue His201 participates in a ubiquinone binding. A run of 4 helical transmembrane segments spans residues 226 to 246, 288 to 308, 320 to 340, and 347 to 367; these read IKDL…ALFF, LGGV…PLLN, VTQT…WIGG, and FTMI…ILIP.

It belongs to the cytochrome b family. The cytochrome bc1 complex contains 11 subunits: 3 respiratory subunits (MT-CYB, CYC1 and UQCRFS1), 2 core proteins (UQCRC1 and UQCRC2) and 6 low-molecular weight proteins (UQCRH/QCR6, UQCRB/QCR7, UQCRQ/QCR8, UQCR10/QCR9, UQCR11/QCR10 and a cleavage product of UQCRFS1). This cytochrome bc1 complex then forms a dimer. Heme b serves as cofactor.

Its subcellular location is the mitochondrion inner membrane. Component of the ubiquinol-cytochrome c reductase complex (complex III or cytochrome b-c1 complex) that is part of the mitochondrial respiratory chain. The b-c1 complex mediates electron transfer from ubiquinol to cytochrome c. Contributes to the generation of a proton gradient across the mitochondrial membrane that is then used for ATP synthesis. The sequence is that of Cytochrome b (MT-CYB) from Akodon philipmyersi (Myers' grass mouse).